Here is an 887-residue protein sequence, read N- to C-terminus: DNA mismatch repair protein MutS (887 aa).

ATP is bound at residue 626 to 633 (GPNMAGKS).

It belongs to the DNA mismatch repair MutS family.

Its function is as follows. This protein is involved in the repair of mismatches in DNA. It is possible that it carries out the mismatch recognition step. This protein has a weak ATPase activity. The chain is DNA mismatch repair protein MutS from Methanococcoides burtonii (strain DSM 6242 / NBRC 107633 / OCM 468 / ACE-M).